Reading from the N-terminus, the 173-residue chain is MTARVCVARIGAAHGLRGEVRLWTFTEDPMSVTRYGPLSTKDGARQLEVSHARAASDHLIATLTGVTTREEAERLNGTELYVARDKLPETDEGEFYHADLIGLAAFDAAGTALGTVAAIHNFGAGDIIEIAPARGPTLMLPFTDAVVPIVDIAGGRVVIEAPAEIDGEEPNSV.

In terms of domain architecture, PRC barrel spans 92-165; it reads EGEFYHADLI…RVVIEAPAEI (74 aa).

The protein belongs to the RimM family. In terms of assembly, binds ribosomal protein uS19.

The protein localises to the cytoplasm. An accessory protein needed during the final step in the assembly of 30S ribosomal subunit, possibly for assembly of the head region. Essential for efficient processing of 16S rRNA. May be needed both before and after RbfA during the maturation of 16S rRNA. It has affinity for free ribosomal 30S subunits but not for 70S ribosomes. The chain is Ribosome maturation factor RimM from Nitrobacter winogradskyi (strain ATCC 25391 / DSM 10237 / CIP 104748 / NCIMB 11846 / Nb-255).